Here is a 414-residue protein sequence, read N- to C-terminus: Calcium/calmodulin-dependent protein kinase cmkA (414 aa).

The Protein kinase domain maps to 23–278; it reads YRFGRTLGAG…SEEALKHPWL (256 aa). Residues 29–37 and Lys50 contribute to the ATP site; that span reads LGAGTYGIV. Asp142 acts as the Proton acceptor in catalysis. Positions 278–314 are autoinhibitory domain; that stretch reads LKGESASDRDLLPEIRAYIARSRLKRGIEIIKLANRI. The calmodulin-binding stretch occupies residues 293–315; the sequence is RAYIARSRLKRGIEIIKLANRIE. Disordered regions lie at residues 320-375 and 394-414; these read QEED…KRSL and EMKE…RAHS. Over residues 351 to 364 the composition is skewed to polar residues; sequence STENSNTHPASTGN.

It belongs to the protein kinase superfamily. CAMK Ser/Thr protein kinase family. CaMK subfamily. As to quaternary structure, monomer. Autophosphorylated in a calcium/calmodulin-dependent manner.

The catalysed reaction is L-seryl-[protein] + ATP = O-phospho-L-seryl-[protein] + ADP + H(+). It carries out the reaction L-threonyl-[protein] + ATP = O-phospho-L-threonyl-[protein] + ADP + H(+). Its activity is regulated as follows. Activated by Ca(2+)/calmodulin. Binding of calmodulin may relieve intrasteric autoinhibition. Functionally, calcium/calmodulin-dependent protein kinase. Required in nuclear division cycle for progression from G2 to mitosis. Required for hyphal growth. This Emericella nidulans (strain FGSC A4 / ATCC 38163 / CBS 112.46 / NRRL 194 / M139) (Aspergillus nidulans) protein is Calcium/calmodulin-dependent protein kinase cmkA (cmkA).